The chain runs to 132 residues: Agouti-related protein (132 aa).

An N-terminal signal peptide occupies residues 1–20 (MLTAAVLSCALLLALPATRG). The propeptide occupies 21–82 (AQMGLAPMEG…VLDLQDREPR (62 aa)). 5 disulfides stabilise this stretch: C87–C102, C94–C108, C101–C119, C105–C129, and C110–C117. An Agouti domain is found at 87 to 129 (CVRLHESCLGQQVPCCDPCATCYCRFFNAFCYCRKLGTAMNPC). Positions 111-113 (RFF) are interaction with melanocortin receptors.

In terms of assembly, interacts with melanocortin receptors MC3R, MC4R and MC5R. Expressed primarily in the adrenal gland, subthalamic nucleus, and hypothalamus, with a lower level of expression occurring in testis, lung, and kidney.

It localises to the secreted. The protein resides in the golgi apparatus lumen. Functionally, plays a role in weight homeostasis. Involved in the control of feeding behavior through the central melanocortin system. Acts as alpha melanocyte-stimulating hormone antagonist by inhibiting cAMP production mediated by stimulation of melanocortin receptors within the hypothalamus and adrenal gland. Has very low activity with MC5R. Is an inverse agonist for MC3R and MC4R being able to suppress their constitutive activity. It promotes MC3R and MC4R endocytosis in an arrestin-dependent manner. This is Agouti-related protein (AGRP) from Homo sapiens (Human).